Reading from the N-terminus, the 309-residue chain is Protein phosphatase 1 regulatory subunit 42 (309 aa).

LRR repeat units follow at residues 29 to 50 (KITHINFSDKNIDAIEDLSLCK), 51 to 72 (NLSVLYLYDNCISQITNLNYAT), 73 to 94 (NLTHLYLQNNCISCIENLRSLK), 95 to 116 (KLEKLYLGGNYIAVIEGLEGLG), 117 to 138 (ELRELHVENQRLPLGEKLLFDP), 147 to 168 (SLCILNISNNNIDDITDLELLE), and 169 to 190 (NLNQLIAVDNQLLHVKDLEFLL). An LRRCT domain is found at 204-242 (NPVCLKPKYRDRLILVSKSLEFLDGKEIKNIERQFLMNW).

In terms of assembly, interacts with PPP1CC isoform gamma-2; the interaction is direct. Interacts with actin, dynein, KIF5B, KIFC1 and tubulin. Associates with microtubules. Post-translationally, phosphorylated; in the testis.

Its subcellular location is the cytoplasm. The protein localises to the cytoskeleton. The protein resides in the microtubule organizing center. It localises to the centrosome. Its function is as follows. Regulates phosphatase activity of protein phosphatase 1 (PP1) complexes in the testis. The polypeptide is Protein phosphatase 1 regulatory subunit 42 (Homo sapiens (Human)).